The following is a 256-amino-acid chain: Pimeloyl-[acyl-carrier protein] methyl ester esterase (256 aa).

One can recognise an AB hydrolase-1 domain in the interval 15 to 242 (HLVLLHGWGL…AAHAPFISHP (228 aa)). Substrate is bound by residues tryptophan 22, 82–83 (SL), and 143–147 (FLALQ). Serine 82 (nucleophile) is an active-site residue. Residues aspartate 207 and histidine 235 contribute to the active site. Histidine 235 serves as a coordination point for substrate.

Belongs to the AB hydrolase superfamily. Carboxylesterase BioH family. Monomer.

It is found in the cytoplasm. The enzyme catalyses 6-carboxyhexanoyl-[ACP] methyl ester + H2O = 6-carboxyhexanoyl-[ACP] + methanol + H(+). It functions in the pathway cofactor biosynthesis; biotin biosynthesis. In terms of biological role, the physiological role of BioH is to remove the methyl group introduced by BioC when the pimeloyl moiety is complete. It allows to synthesize pimeloyl-ACP via the fatty acid synthetic pathway through the hydrolysis of the ester bonds of pimeloyl-ACP esters. The chain is Pimeloyl-[acyl-carrier protein] methyl ester esterase from Escherichia coli O17:K52:H18 (strain UMN026 / ExPEC).